The sequence spans 436 residues: Carboxypeptidase A5 (436 aa).

The signal sequence occupies residues 1–33 (MQGTPAGGTSPGPSPMDRQTLLVFSLILAAALG). Positions 34-126 (QMNFTGDQVL…EREAMAKSRR (93 aa)) are cleaved as a propeptide — activation peptide. In terms of domain architecture, Peptidase M14 spans 138–431 (SYHTLEEISS…MALRTIMEHT (294 aa)). Zn(2+) is bound by residues His-196 and Glu-199. Substrate is bound by residues 196–199 (HSRE), Arg-254, and 271–272 (NR). Cysteines 265 and 288 form a disulfide. His-323 lines the Zn(2+) pocket. Substrate-binding positions include 324 to 325 (SY) and Tyr-375. Glu-397 acts as the Proton donor/acceptor in catalysis.

It belongs to the peptidase M14 family. Requires Zn(2+) as cofactor.

It is found in the secreted. In Macaca fascicularis (Crab-eating macaque), this protein is Carboxypeptidase A5 (CPA5).